Consider the following 332-residue polypeptide: MQPETQSSALPAYRFSIAPMLDWTDRHCRYFLRLLSRQTQLYTEMVTTGAIIHGKGDYLAYSEEEHPVALQLGGSDPAQLAHCAKLAEARGYDEINLNVGCPSDRVQNGMFGACLMGNAQLVADCVKAMRDVVSIPVTVKTRIGIDDQDSYAFLCDFIDTVSGQGECEMFIIHARKAWLSGLSPKENREIPPLDYPRVYQLKRDFPHLTMSINGGIKSLEEAKEHLRHMDGVMVGREAYQNPGILAAVDREIFGADTTDADPVAVVRAMYPYIERELSQGAYLGHITRHMLGLFQGIPGARQWRRYLSENAHKAGADVAVLEQALKLVADKR.

FMN contacts are provided by residues 19-21 (PML) and glutamine 71. Catalysis depends on cysteine 101, which acts as the Proton donor. FMN contacts are provided by residues lysine 140, histidine 173, 213 to 215 (NGG), and 235 to 236 (GR).

This sequence belongs to the Dus family. DusA subfamily. The cofactor is FMN.

It catalyses the reaction 5,6-dihydrouridine(20) in tRNA + NADP(+) = uridine(20) in tRNA + NADPH + H(+). It carries out the reaction 5,6-dihydrouridine(20) in tRNA + NAD(+) = uridine(20) in tRNA + NADH + H(+). The enzyme catalyses 5,6-dihydrouridine(20a) in tRNA + NADP(+) = uridine(20a) in tRNA + NADPH + H(+). The catalysed reaction is 5,6-dihydrouridine(20a) in tRNA + NAD(+) = uridine(20a) in tRNA + NADH + H(+). Catalyzes the synthesis of 5,6-dihydrouridine (D), a modified base found in the D-loop of most tRNAs, via the reduction of the C5-C6 double bond in target uridines. Specifically modifies U20 and U20a in tRNAs. This Salmonella typhimurium (strain LT2 / SGSC1412 / ATCC 700720) protein is tRNA-dihydrouridine(20/20a) synthase.